A 326-amino-acid polypeptide reads, in one-letter code: 5,10-methylenetetrahydromethanopterin reductase (326 aa).

It belongs to the mer family.

The protein resides in the cytoplasm. It catalyses the reaction 5-methyl-5,6,7,8-tetrahydromethanopterin + oxidized coenzyme F420-(gamma-L-Glu)(n) + H(+) = 5,10-methylenetetrahydromethanopterin + reduced coenzyme F420-(gamma-L-Glu)(n). It participates in one-carbon metabolism; methanogenesis from CO(2); methyl-coenzyme M from 5,10-methylene-5,6,7,8-tetrahydromethanopterin: step 1/2. In terms of biological role, catalyzes the reversible reduction of methylene-H(4)MPT to methyl-H(4)MPT. This is 5,10-methylenetetrahydromethanopterin reductase from Methanolobus tindarius.